The primary structure comprises 236 residues: tRNA (guanine-N(7)-)-methyltransferase (236 aa).

Residues 1-23 form a disordered region; that stretch reads MEADVQRAQQAQLEKGSSVPPWT. Residues Asp-69, Glu-94, Asn-121, and Asp-144 each coordinate S-adenosyl-L-methionine. Asp-144 is a catalytic residue. Substrate contacts are provided by Lys-148 and Asp-180.

It belongs to the class I-like SAM-binding methyltransferase superfamily. TrmB family.

It catalyses the reaction guanosine(46) in tRNA + S-adenosyl-L-methionine = N(7)-methylguanosine(46) in tRNA + S-adenosyl-L-homocysteine. Its pathway is tRNA modification; N(7)-methylguanine-tRNA biosynthesis. Catalyzes the formation of N(7)-methylguanine at position 46 (m7G46) in tRNA. The protein is tRNA (guanine-N(7)-)-methyltransferase of Synechococcus sp. (strain JA-3-3Ab) (Cyanobacteria bacterium Yellowstone A-Prime).